The chain runs to 392 residues: Lipid-A-disaccharide synthase (392 aa).

The protein belongs to the LpxB family.

It catalyses the reaction a lipid X + a UDP-2-N,3-O-bis[(3R)-3-hydroxyacyl]-alpha-D-glucosamine = a lipid A disaccharide + UDP + H(+). The protein operates within bacterial outer membrane biogenesis; LPS lipid A biosynthesis. Condensation of UDP-2,3-diacylglucosamine and 2,3-diacylglucosamine-1-phosphate to form lipid A disaccharide, a precursor of lipid A, a phosphorylated glycolipid that anchors the lipopolysaccharide to the outer membrane of the cell. The sequence is that of Lipid-A-disaccharide synthase from Prochlorococcus marinus (strain MIT 9313).